A 231-amino-acid chain; its full sequence is Class II histocompatibility antigen, B-L beta chain (231 aa).

Residues 1–89 (FFQWSATVEC…IVAPLTLQRR (89 aa)) form a beta-1 region. Over 1–194 (FFQWSATVEC…PGDVSRSKLL (194 aa)) the chain is Extracellular. Intrachain disulfides connect C10-C74 and C111-C167. N-linked (GlcNAc...) asparagine glycosylation is present at N14. The segment at 90 to 182 (EPKVRIFALQ…SLQQPITQRW (93 aa)) is beta-2. One can recognise an Ig-like C1-type domain in the interval 91–179 (PKVRIFALQS…EHTSLQQPIT (89 aa)). A connecting peptide region spans residues 183–194 (EPPGDVSRSKLL). A helical membrane pass occupies residues 195–219 (MGVGGFVLGLVYLALGIFFFLCSKK). Residues 220 to 231 (GQPDPTSPGILN) lie on the Cytoplasmic side of the membrane.

It belongs to the MHC class II family.

The protein localises to the membrane. The chain is Class II histocompatibility antigen, B-L beta chain from Gallus gallus (Chicken).